We begin with the raw amino-acid sequence, 483 residues long: Homoserine O-acetyltransferase (483 aa).

Residues 47–346 (NVILICHALT…HFGHDAFLLE (300 aa)) form the AB hydrolase-1 domain. Catalysis depends on Ser152, which acts as the Nucleophile. Arg221 is a binding site for substrate. Active-site residues include Asp307 and His340. Asp341 lines the substrate pocket. 2 consecutive CBS domains span residues 367 to 423 (MSED…KISS) and 428 to 483 (LSRD…KGTK).

The protein belongs to the AB hydrolase superfamily. MetX family. Homodimer.

The protein localises to the cytoplasm. The catalysed reaction is L-homoserine + acetyl-CoA = O-acetyl-L-homoserine + CoA. The protein operates within amino-acid biosynthesis; L-methionine biosynthesis via de novo pathway; O-acetyl-L-homoserine from L-homoserine: step 1/1. In terms of biological role, transfers an acetyl group from acetyl-CoA to L-homoserine, forming acetyl-L-homoserine. This Methanohalophilus mahii (strain ATCC 35705 / DSM 5219 / SLP) protein is Homoserine O-acetyltransferase.